A 103-amino-acid chain; its full sequence is Protein IQ-DOMAIN 20 (103 aa).

Positions 10–22 (VVRRKLLRRSQSR) are calmodulin-binding. IQ domains are found at residues 36 to 62 (EEIA…LKSL) and 63 to 87 (VKLQ…CMHA).

Belongs to the IQD family. Interacts with calmodulin (CaM and CML) at the plasma membrane in a calcium ion Ca(2+)- independent manner, however, Ca(2+) seems to modulate calmodulin binding. Binds to multiple calmodulin (CaM) in the presence of Ca(2+) and CaM-like proteins.

The protein resides in the nucleus. It localises to the nucleolus. Its subcellular location is the cell membrane. In terms of biological role, may be involved in cooperative interactions with calmodulins or calmodulin-like proteins. Recruits calmodulin proteins to microtubules, thus being a potential scaffold in cellular signaling and trafficking. May associate with nucleic acids and regulate gene expression at the transcriptional or post-transcriptional level. The polypeptide is Protein IQ-DOMAIN 20 (Arabidopsis thaliana (Mouse-ear cress)).